A 406-amino-acid polypeptide reads, in one-letter code: Cytochrome P450 165C4 (406 aa).

Cys-356 serves as a coordination point for heme.

This sequence belongs to the cytochrome P450 family. Heme is required as a cofactor.

It participates in antibiotic biosynthesis; vancomycin biosynthesis. In terms of biological role, involved in the coupling of aromatic side chains of the heptapeptide of vancomycin. This Amycolatopsis orientalis (Nocardia orientalis) protein is Cytochrome P450 165C4 (cyp165C4).